The sequence spans 768 residues: Probable beta-glucosidase M (768 aa).

Positions Met-1 to Ala-19 are cleaved as a signal peptide. Residues Asn-25, Asn-72, and Asn-259 are each glycosylated (N-linked (GlcNAc...) asparagine). The active site involves Asp-287. 7 N-linked (GlcNAc...) asparagine glycosylation sites follow: Asn-315, Asn-322, Asn-394, Asn-434, Asn-472, Asn-543, and Asn-651.

Belongs to the glycosyl hydrolase 3 family.

It localises to the secreted. The enzyme catalyses Hydrolysis of terminal, non-reducing beta-D-glucosyl residues with release of beta-D-glucose.. The protein operates within glycan metabolism; cellulose degradation. In terms of biological role, beta-glucosidases are one of a number of cellulolytic enzymes involved in the degradation of cellulosic biomass. Catalyzes the last step releasing glucose from the inhibitory cellobiose. The sequence is that of Probable beta-glucosidase M (bglM) from Aspergillus oryzae (strain ATCC 42149 / RIB 40) (Yellow koji mold).